The sequence spans 152 residues: Snaclec agkisacutacin subunit A (152 aa).

The N-terminal stretch at 1-23 (MGRFIFVSFGLLVVFLSLSGTAA) is a signal peptide. The C-type lectin domain maps to 24–152 (DCSSGWSSYE…EQQDPFVCEA (129 aa)). 3 disulfides stabilise this stretch: Cys-25/Cys-36, Cys-53/Cys-150, and Cys-125/Cys-142. The Ca(2+) site is built by Ser-64, Glu-66, and Glu-70. Residue Glu-151 coordinates Ca(2+).

It belongs to the snaclec family. In terms of assembly, heterodimer with subunit B of AaACP or agkisacutacin; disulfide-linked. As to expression, expressed by the venom gland.

It localises to the secreted. Its function is as follows. Anticoagulant protein which binds to the gamma-carboxyglutamic acid-domain regions of factors IX (F9) and factor X (F10) in the presence of calcium with a 1 to 1 stoichiometry. Also inhibits platelet aggregation by binding to platelet glycoprotein Ibalpha (GP1BA) and functioning as a blocker of von Willebrand factor (VWF). Is devoid of hemorrhagic and lethal activities. Possesses antithrombotic and thrombolytic activities. Also hydrolyzes the Aalpha-chain of fibrinogen (FGA). Does not affect the Bbeta-chain (FGB) and the gamma chain (FGG). The protein is Snaclec agkisacutacin subunit A of Deinagkistrodon acutus (Hundred-pace snake).